We begin with the raw amino-acid sequence, 181 residues long: Shikimate kinase 2 (181 aa).

Position 12-17 (12-17) interacts with ATP; sequence GCGKTT. 2 residues coordinate Mg(2+): T16 and D32. Residues D34, R58, and G79 each coordinate substrate. Residues 112–126 form an LID domain region; the sequence is EAEPEADLRPTLTGK. Residue R120 coordinates ATP. Residue R139 coordinates substrate.

It belongs to the shikimate kinase family. AroL subfamily. Monomer. It depends on Mg(2+) as a cofactor.

The protein resides in the cytoplasm. It carries out the reaction shikimate + ATP = 3-phosphoshikimate + ADP + H(+). It functions in the pathway metabolic intermediate biosynthesis; chorismate biosynthesis; chorismate from D-erythrose 4-phosphate and phosphoenolpyruvate: step 5/7. Catalyzes the specific phosphorylation of the 3-hydroxyl group of shikimic acid using ATP as a cosubstrate. The chain is Shikimate kinase 2 from Salmonella dublin (strain CT_02021853).